Here is a 96-residue protein sequence, read N- to C-terminus: uncharacterized protein (96 aa).

The helical transmembrane segment at 13–35 (PVVRYVVALLHWLLWRVVVIIAI) threads the bilayer.

The protein resides in the membrane. This is an uncharacterized protein from Archaeoglobus fulgidus (strain ATCC 49558 / DSM 4304 / JCM 9628 / NBRC 100126 / VC-16).